Reading from the N-terminus, the 471-residue chain is Regulator of microtubule dynamics protein 3 (471 aa).

The Mitochondrial intermembrane portion of the chain corresponds to 1–12; sequence MSRLGALGGSRA. A helical transmembrane segment spans residues 13 to 35; sequence GLGLLLGTAAGLGFLCVLYSQRW. The Cytoplasmic portion of the chain corresponds to 36–471; that stretch reads KRTQRHGRSQ…LEELEVILGK (436 aa). Ser-44, Ser-46, Ser-50, and Ser-57 each carry phosphoserine. Positions 91 to 125 form a coiled coil; it reads LDRLDFVLTSLMALRREVEELQRSLQGLAGEIVGE. An FFAT motif is present at residues 157–163; the sequence is VYFTASS. Thr-160 is modified (phosphothreonine). Residues 168–203 are disordered; it reads TDAESEGGYTTANAESDYERDSDKESEDAEDEVSCE. Residues Ser-183, Ser-193, Ser-212, and Ser-233 each carry the phosphoserine modification. The span at 191-201 shows a compositional bias: acidic residues; that stretch reads KESEDAEDEVS.

This sequence belongs to the RMDN family. As to quaternary structure, interacts with PTPN2. Interacts with microtubules. Interacts with VAPB. Interacts (via FFAT motif) with MOSPD2 (via MSP domain). Interacts (via phosphorylated FFAT motif) with MOSPD2, VAPA and VAPB. Post-translationally, phosphorylation at Thr-160 of the FFAT motif activates interaction with MOSPD2, VAPA and VAPB.

It is found in the mitochondrion outer membrane. Its subcellular location is the cytoplasm. The protein localises to the nucleus. It localises to the cytoskeleton. The protein resides in the spindle. It is found in the spindle pole. Functionally, involved in cellular calcium homeostasis regulation. May participate in differentiation and apoptosis of keratinocytes. Overexpression induces apoptosis. This is Regulator of microtubule dynamics protein 3 from Rattus norvegicus (Rat).